Reading from the N-terminus, the 82-residue chain is Small ribosomal subunit protein bS16 (82 aa).

It belongs to the bacterial ribosomal protein bS16 family.

The chain is Small ribosomal subunit protein bS16 from Acidobacterium capsulatum (strain ATCC 51196 / DSM 11244 / BCRC 80197 / JCM 7670 / NBRC 15755 / NCIMB 13165 / 161).